Consider the following 496-residue polypeptide: Solute carrier family 2, facilitated glucose transporter member 3 (496 aa).

At 1-10 (MGTQKVTPAL) the chain is on the cytoplasmic side. The helical transmembrane segment at 11–32 (IFAITVATIGSFQFGYNTGVIN) threads the bilayer. Residues 33-64 (APEKIIKEFINKTLTDKGNAPPSEVLLTSLWS) lie on the Extracellular side of the membrane. A glycan (N-linked (GlcNAc...) asparagine) is linked at Asn43. Residues 65–85 (LSVAIFSVGGMIGSFSVGLFV) form a helical membrane-spanning segment. Over 86-90 (NRFGR) the chain is Cytoplasmic. The chain crosses the membrane as a helical span at residues 91 to 111 (RNSMLIVNLLAVTGGCFMGLC). Residues 112 to 118 (KVAKSVE) lie on the Extracellular side of the membrane. A helical membrane pass occupies residues 119–142 (MLILGRLVIGLFCGLCTGFVPMYI). Topologically, residues 143 to 153 (GEISPTALRGA) are cytoplasmic. Residues 154–174 (FGTLNQLGIVVGILVAQIFGL) traverse the membrane as a helical segment. Gln159 is a D-glucose binding site. The Extracellular portion of the chain corresponds to 175–183 (EFILGSEEL). The helical transmembrane segment at 184 to 204 (WPLLLGFTILPAILQSAALPF) threads the bilayer. Residues 205–269 (CPESPRFLLI…LFRVSSYRQP (65 aa)) lie on the Cytoplasmic side of the membrane. Thr232 carries the phosphothreonine modification. Residues 270 to 290 (IIISIVLQLSQQLSGINAVFY) form a helical membrane-spanning segment. The interval 277–279 (QLS) is important for selectivity against fructose. D-glucose is bound by residues 280–281 (QQ) and Asn286. At 291–304 (YSTGIFKDAGVQEP) the chain is on the extracellular side. The helical transmembrane segment at 305 to 325 (IYATIGAGVVNTIFTVVSLFL) threads the bilayer. Asn315 is a D-glucose binding site. The Cytoplasmic portion of the chain corresponds to 326–331 (VERAGR). A helical transmembrane segment spans residues 332–352 (RTLHMIGLGGMAFCSTLMTVS). The Extracellular segment spans residues 353–363 (LLLKDNYNGMS). The chain crosses the membrane as a helical span at residues 364–389 (FVCIGAILVFVAFFEIGPGPIPWFIV). Residues Glu378 and Trp386 each coordinate D-glucose. Topologically, residues 390–399 (AELFSQGPRP) are cytoplasmic. The helical transmembrane segment at 400–420 (AAMAVAGCSNWTSNFLVGLLF) threads the bilayer. Over 421–429 (PSAAHYLGA) the chain is Extracellular. The helical transmembrane segment at 430–450 (YVFIIFTGFLITFLAFTFFKV) threads the bilayer. At 451–496 (PETRGRTFEDITRAFEGQAHGADRSGKDGVMEMNSIEPAKETTTNV) the chain is on the cytoplasmic side. Residues Ser475 and Ser485 each carry the phosphoserine modification. Residue Thr492 is modified to Phosphothreonine.

The protein belongs to the major facilitator superfamily. Sugar transporter (TC 2.A.1.1) family. Glucose transporter subfamily. In terms of assembly, interacts with SMIM43; the interaction may promote SLC2A3-mediated glucose transport to meet the energy needs of mesendoderm differentiation. Highly expressed in brain. Expressed in many tissues.

It localises to the cell membrane. It is found in the perikaryon. Its subcellular location is the cell projection. It catalyses the reaction D-glucose(out) = D-glucose(in). It carries out the reaction D-galactose(in) = D-galactose(out). Deoxyglucose transport is inhibited by D-glucose, D-galactose and maltose. Galactose transport is inhibited by D-glucose and maltose. Facilitative glucose transporter. Can also mediate the uptake of various other monosaccharides across the cell membrane. Mediates the uptake of glucose, 2-deoxyglucose, galactose, mannose, xylose and fucose, and probably also dehydroascorbate. Does not mediate fructose transport. Required for mesendoderm differentiation. The protein is Solute carrier family 2, facilitated glucose transporter member 3 of Homo sapiens (Human).